Here is a 228-residue protein sequence, read N- to C-terminus: Phosphoribosylformylglycinamidine synthase subunit PurQ (228 aa).

The region spanning 4 to 226 (AVVVFPGSNC…VNYWRETHVV (223 aa)) is the Glutamine amidotransferase type-1 domain. The Nucleophile role is filled by C86. Residues H195 and E197 contribute to the active site.

As to quaternary structure, part of the FGAM synthase complex composed of 1 PurL, 1 PurQ and 2 PurS subunits.

The protein resides in the cytoplasm. It catalyses the reaction N(2)-formyl-N(1)-(5-phospho-beta-D-ribosyl)glycinamide + L-glutamine + ATP + H2O = 2-formamido-N(1)-(5-O-phospho-beta-D-ribosyl)acetamidine + L-glutamate + ADP + phosphate + H(+). The catalysed reaction is L-glutamine + H2O = L-glutamate + NH4(+). It participates in purine metabolism; IMP biosynthesis via de novo pathway; 5-amino-1-(5-phospho-D-ribosyl)imidazole from N(2)-formyl-N(1)-(5-phospho-D-ribosyl)glycinamide: step 1/2. Its function is as follows. Part of the phosphoribosylformylglycinamidine synthase complex involved in the purines biosynthetic pathway. Catalyzes the ATP-dependent conversion of formylglycinamide ribonucleotide (FGAR) and glutamine to yield formylglycinamidine ribonucleotide (FGAM) and glutamate. The FGAM synthase complex is composed of three subunits. PurQ produces an ammonia molecule by converting glutamine to glutamate. PurL transfers the ammonia molecule to FGAR to form FGAM in an ATP-dependent manner. PurS interacts with PurQ and PurL and is thought to assist in the transfer of the ammonia molecule from PurQ to PurL. This chain is Phosphoribosylformylglycinamidine synthase subunit PurQ, found in Geobacillus kaustophilus (strain HTA426).